The following is a 699-amino-acid chain: Serine/threonine-protein kinase PRR2 (699 aa).

Residues 168-193 form a disordered region; the sequence is SSTKKNLANDISDNKHNNNSSNTIGH. The span at 184–193 shows a compositional bias: polar residues; the sequence is NNNSSNTIGH. One can recognise a Protein kinase domain in the interval 361-653; sequence RDLDVVLGEG…INGILQDGWI (293 aa). Residues 367–375 and K390 contribute to the ATP site; that span reads LGEGSGGKV. The active-site Proton acceptor is the D484.

This sequence belongs to the protein kinase superfamily. Ser/Thr protein kinase family.

The enzyme catalyses L-seryl-[protein] + ATP = O-phospho-L-seryl-[protein] + ADP + H(+). It carries out the reaction L-threonyl-[protein] + ATP = O-phospho-L-threonyl-[protein] + ADP + H(+). In terms of biological role, protein kinase that functions as a regulator in the pheromone-induced mating pathway downstream of mitogen-activated protein kinase (MAPK) FUS3. Diminishes transcriptional induction of genes in response to pheromone signaling. This is Serine/threonine-protein kinase PRR2 (PRR2) from Saccharomyces cerevisiae (strain ATCC 204508 / S288c) (Baker's yeast).